Reading from the N-terminus, the 166-residue chain is Small ribosomal subunit protein uS9 (166 aa).

Over residues 1-16 (MSDTTNEVEETYEVDE) the composition is skewed to acidic residues. The interval 1-45 (MSDTTNEVEETYEVDEQGIAYSSESAPSADAPLRPATIAPANATG) is disordered.

This sequence belongs to the universal ribosomal protein uS9 family.

The sequence is that of Small ribosomal subunit protein uS9 from Nocardioides sp. (strain ATCC BAA-499 / JS614).